Reading from the N-terminus, the 422-residue chain is Inhibitory synaptic factor 2A (422 aa).

Residues 143 to 163 form a disordered region; that stretch reads FLADSKEKSEAGPMEEPRPCS. The segment covering 146–160 has biased composition (basic and acidic residues); it reads DSKEKSEAGPMEEPR. A Phosphoserine modification is found at S177. Residues 344-370 are a coiled coil; it reads TEVVDLKAQLQVMENLISSSQETIKVL.

Belongs to the INSYN2 family. As to quaternary structure, interacts with GPHN.

Its subcellular location is the postsynaptic density. Component of the protein machinery at the inhibitory synapses, probably acting as a scaffold. Inhibitory synapses dampen neuronal activity through postsynaptic hyperpolarization. This synaptic inhibition is fundamental for the functioning of the central nervous system, shaping and orchestrating the flow of information through neuronal networks to generate a precise neural code. The protein is Inhibitory synaptic factor 2A of Mus musculus (Mouse).